We begin with the raw amino-acid sequence, 254 residues long: Probable transcriptional regulatory protein Cyan7425_4347 (254 aa).

Belongs to the TACO1 family.

The protein resides in the cytoplasm. The polypeptide is Probable transcriptional regulatory protein Cyan7425_4347 (Cyanothece sp. (strain PCC 7425 / ATCC 29141)).